Here is a 1823-residue protein sequence, read N- to C-terminus: MTYNNNNNYLAPPLMTSTSTSTSTSTPTSTKTSPLNTSSSSNILKSNSRNPSPNNPTNIGNSSGGGGVSSNNSNNIVYSNSNNINTSTFHYNFNVKFNEIVNSIAVNRAGTLVCLGGKKSLQVVDLELLKSVRNIPQQSKWEVGVVDWNSQSPNLVASSSNQDTFIWDIENPKYPLLGQFSSHQRAISDLSWSLFDNNILATTSADSFVNIWDLRTPKKAVKFKSLKSHILGAIQVKWNRFNSNVLASAHESYLMIWDIRKDSQELNTAVHSAKVYGIDWSHRDEKEILTCSQDKTVKIWNYPSPKPKSTIITSNPILRAKYLPLGSGGIVTISDRGENHIRLWDSATSDYSTPVETFIGHTDNVRSFDFRVRSSQNDNDIQIVSWSKDQYLRLWKLDDHLKDLFNIEYIPFTPLNLPTTTTTTTTATTTTTNNSTSEMLNESTDNNNNTNSLNSSTLLSTPNLESSINSLNMELTIEQQQLDDSNTPKDLEYELKIIQSKVIDKYLKIEQVNLFKRTCVVICTIPNNYQPDDDNNNNNLNNLNNNNNTQDNIDNNDDNNNNELIDSTTVQIRFSFPSLYPSTYPNLEFIPHACTTPLKTNLLIKSTLNELCAFKSSQSKNCFEQCLIELVKLVKQYILDEKPKNTSINITETNNNNNNHNNSVQNNNNNNNNNNNNNNNSGGGFLKNVFSKSSKAVEVVKQPFINLRNSSGRIDISQQQQQQQQQQAATTSTSSSSSSSSNTQQQQQFLTATVSNKGGTVLSKSPTSPRMFEQYRPGKTNKTNEIIFLNNYKDSNEEQLPLSPILTNLNNNSNNNSGSGGGGSSNMNASITTSTTTNDQVSLSVHRNSYRIQENYPCPRLCGAVFGGCGKLIVFRNTIITNIPNNNKNSDNSNNNNSSSSNKNSDNSNNSNNNSNNTNSSSSSNNGGIANVGGGSSSTSSLIHHHLQHLHLNQPQLNLLSLSLSSSSSSISDTTNNTSNTTQNIQNTTKNINPPRTYKELLNILSTTNNTIKNNITGNNNINSNSNTTNNLTSPNPNRLNRLNEKQPYSSSPFNDNPLINDYKNNIFGTPSTSHSFLASPQPSSPISFMNHIDTLLDDSENNLMTMDNNNNNNIVNDEETQQLVTSSSPTFSKSSLNNINNTTNNSNNNSSNSNNNSNSNNNNNNNNNNNNVNNNNDNNNGNGKSLQKTMKIIDISTLSLLNVNLANSYILSGKPVEEICKYNSELAEKENRKDLVKLWNTLGMITDSKLYLKQLINQQQQQSHFGFSGSSGSTGMGGSSSTGIASSTGSNSIRRPTKLESSLHQSISMSNLGQIPSSASSSYSQTSPSLPYNQLYHQTTLQTPSSPSSQQQQIQFYQQQALQLQQQQQQQQQQQREIQFKQTQLIQQAQIEDNGWPNHALGRKLVKSLIDYYKKLEDVQTLATISCILILAANQLQKLKNGESITSIGSSSSSSSSSLASSPLTFSAGGGGGGSYSPMFNFSAISISAPMGIDDMVSKQKGHLYNYYGQQQHSHYHHGYQHHNIHQTYGSHPNDVITYDPNLCLLDPNNSKIYDYYRQQYSDLLYRWGLLEKRAEVLKYIQHKEVDKGINFSIECIKCNRKLNNFYCNNCKIYAVKCSICNISVRGLSSFCLYCGHGGHTNHIKGWFEKQTKCPTGCGCTCSFNLPFIQQQQYQQQLQQQQQQLQQQLQLQQTQQQQPQHYQQHRHSMSGTSHYHQQQPHTHNYQQHISSYAHTTYQPHTPRNNGQPVLPQQRRYSISTFDPQQEQDHEKFNHGGGSGGGDAIFHDILFSPNSSSSSSSYQQQTKNSHQYHHPSNPYMFSN.

Residues 1–68 form a disordered region; the sequence is MTYNNNNNYL…IGNSSGGGGV (68 aa). The span at 16–61 shows a compositional bias: low complexity; sequence TSTSTSTSTSTPTSTKTSPLNTSSSSNILKSNSRNPSPNNPTNIGN. WD repeat units follow at residues 138 to 177, 182 to 222, 228 to 267, 270 to 310, 312 to 354, and 360 to 405; these read QSKW…YPLL, SHQR…KAVK, SHIL…QELN, VHSA…PKST, ITSN…YSTP, and GHTD…KDLF. Disordered stretches follow at residues 418-461, 530-562, 649-687, 714-778, 805-840, 883-940, 966-996, 1014-1058, and 1122-1186; these read PTTT…LLST, QPDD…NNNN, NITE…GFLK, IDIS…YRPG, ILTN…TNDQ, IPNN…SSTS, SSSS…NPPR, NNIT…NDNP, and QQLV…NGKS. 2 stretches are compositionally biased toward low complexity: residues 419-432 and 440-461; these read TTTT…TTTT and LNES…LLST. 2 stretches are compositionally biased toward low complexity: residues 654 to 680 and 717 to 748; these read NNNN…NNNN and SQQQ…QQQQ. Composition is skewed to polar residues over residues 749–768 and 827–840; these read FLTA…SPTS and MNAS…TNDQ. Composition is skewed to low complexity over residues 885–926, 966–993, 1014–1041, and 1127–1183; these read NNNK…SSNN, SSSS…KNIN, NNIT…NRLN, and SSSP…NNGN. One copy of the WD 7 repeat lies at 1207 to 1250; sequence ANSYILSGKPVEEICKYNSELAEKENRKDLVKLWNTLGMITDSK. Disordered regions lie at residues 1264–1307, 1697–1725, and 1764–1823; these read SHFG…LHQS, QQQP…HTHN, and PQQE…MFSN. The segment covering 1282-1293 has biased composition (low complexity); it reads STGIASSTGSNS. Residues 1710–1725 show a composition bias toward polar residues; that stretch reads MSGTSHYHQQQPHTHN.

This Dictyostelium discoideum (Social amoeba) protein is WD repeat-containing protein DDB_G0292056.